A 138-amino-acid polypeptide reads, in one-letter code: Cysteine desulfuration protein SufE (138 aa).

C51 acts as the Cysteine persulfide intermediate in catalysis.

The protein belongs to the SufE family. Homodimer. Interacts with SufS.

The protein localises to the cytoplasm. It participates in cofactor biosynthesis; iron-sulfur cluster biosynthesis. Functionally, participates in cysteine desulfuration mediated by SufS. Cysteine desulfuration mobilizes sulfur from L-cysteine to yield L-alanine and constitutes an essential step in sulfur metabolism for biosynthesis of a variety of sulfur-containing biomolecules. Functions as a sulfur acceptor for SufS, by mediating the direct transfer of the sulfur atom from the S-sulfanylcysteine of SufS, an intermediate product of cysteine desulfuration process. The polypeptide is Cysteine desulfuration protein SufE (Escherichia coli O17:K52:H18 (strain UMN026 / ExPEC)).